Here is a 661-residue protein sequence, read N- to C-terminus: Putative lipase ATG15 (661 aa).

At 1–3 (MIW) the chain is on the cytoplasmic side. A helical; Signal-anchor for type II membrane protein transmembrane segment spans residues 4–24 (NGRLVLACVLLIAGCSGQVDA). Over 25 to 661 (ARTREQRKAF…FDDFDPKNDL (637 aa)) the chain is Lumenal. N-linked (GlcNAc...) asparagine glycosylation is found at N155, N190, N212, N271, and N295. S311 functions as the Charge relay system in the catalytic mechanism. An N-linked (GlcNAc...) asparagine glycan is attached at N457. 2 disordered regions span residues 492-559 (ESTT…TSTS) and 574-597 (TTTSATPKPSSTARTVTKTKTTTS). Low complexity-rich tracts occupy residues 493-513 (STTSAPTTSTSTSSSTSSTRT), 527-559 (TTTSSSSSISSPSATPAPTITTTSSLPTSTSTS), and 574-595 (TTTSATPKPSSTARTVTKTKTT).

This sequence belongs to the AB hydrolase superfamily. Lipase family. Binds to both phosphatidylinositol (PI) and phosphatidylinositol 3,5-bisphosphate (PIP2).

The protein resides in the endosome. The protein localises to the multivesicular body membrane. Its subcellular location is the prevacuolar compartment membrane. It catalyses the reaction a triacylglycerol + H2O = a diacylglycerol + a fatty acid + H(+). In terms of biological role, lipase which is essential for lysis of subvacuolar cytoplasm to vacuole targeted bodies and intravacuolar autophagic bodies. Involved in the lysis of intravacuolar multivesicular body (MVB) vesicles. The intravacuolar membrane disintegration by ATG15 is critical to life span extension. The polypeptide is Putative lipase ATG15 (ATG15) (Passalora fulva (Tomato leaf mold)).